Consider the following 247-residue polypeptide: Small ribosomal subunit protein uS2 (247 aa).

This sequence belongs to the universal ribosomal protein uS2 family.

The protein is Small ribosomal subunit protein uS2 of Ectopseudomonas mendocina (strain ymp) (Pseudomonas mendocina).